The chain runs to 453 residues: MSQSPKVGFVSLGCPKALVDSEQIITQLRAEGYEISGSYDGADLVVVNTCGFIDEAVQESLDAIGEALTENGKVIVTGCLGAKSSASGSNLIEEVHPKVLAVTGPHAVGEVMQAVHSHLPKPHDPFVDLVPAAGIKLTPRHYAYLKISEGCNHRCTFCIIPSMRGDLVSRPVAEVMLEAENLFKSGVKELLVISQDTSAYGVDVKYRTGFWNGKPIKTRMTDLVAALGELAAQYGAWVRLHYVYPYPSVDEVIPLMAEGPFKGHVLPYLDVPFQHAHPEVLKRMKRPANAEKVLERVQKWREICPDLTIRSTFIAGFPGETEEQFETLLDFIREAELDRVGCFAYSPVEGATANDLDGALPDEVREERRARFMEVAEEVSANRMQRKIGKTLKVLIDEVSAEGGIGRTAADAPEIDGVVYVEPAAKASKRYKVGDFVSVKITGADGHDLWGEV.

The region spanning 5 to 120 (PKVGFVSLGC…VMQAVHSHLP (116 aa)) is the MTTase N-terminal domain. [4Fe-4S] cluster-binding residues include Cys-14, Cys-50, Cys-79, Cys-151, Cys-155, and Cys-158. Residues 137 to 382 (LTPRHYAYLK…MEVAEEVSAN (246 aa)) form the Radical SAM core domain. The TRAM domain occupies 385-453 (QRKIGKTLKV…ADGHDLWGEV (69 aa)).

It belongs to the methylthiotransferase family. RimO subfamily. [4Fe-4S] cluster is required as a cofactor.

It localises to the cytoplasm. The catalysed reaction is L-aspartate(89)-[ribosomal protein uS12]-hydrogen + (sulfur carrier)-SH + AH2 + 2 S-adenosyl-L-methionine = 3-methylsulfanyl-L-aspartate(89)-[ribosomal protein uS12]-hydrogen + (sulfur carrier)-H + 5'-deoxyadenosine + L-methionine + A + S-adenosyl-L-homocysteine + 2 H(+). Functionally, catalyzes the methylthiolation of an aspartic acid residue of ribosomal protein uS12. The sequence is that of Ribosomal protein uS12 methylthiotransferase RimO from Burkholderia orbicola (strain MC0-3).